Here is a 102-residue protein sequence, read N- to C-terminus: Small ribosomal subunit protein uS10 (102 aa).

It belongs to the universal ribosomal protein uS10 family. In terms of assembly, part of the 30S ribosomal subunit.

Functionally, involved in the binding of tRNA to the ribosomes. This is Small ribosomal subunit protein uS10 from Sulfurisphaera tokodaii (strain DSM 16993 / JCM 10545 / NBRC 100140 / 7) (Sulfolobus tokodaii).